The sequence spans 714 residues: Cyclomaltodextrin glucanotransferase (714 aa).

The N-terminal stretch at 1–27 (MKSRYKRLTSLALSLSMALGISLPAWA) is a signal peptide. Residues 28 to 165 (SPDTSVDNKV…NIKVVIDFAP (138 aa)) form an A1 region. Positions 54, 59, 60, 78, and 80 each coordinate Ca(2+). Residue 127–128 (YW) participates in substrate binding. Asparagine 166 provides a ligand contact to Ca(2+). The segment at 166–229 (NHTSPADRDN…NLYDLADINH (64 aa)) is b. Residue histidine 167 coordinates substrate. Ca(2+) is bound at residue isoleucine 217. Position 220–223 (220–223 (NLYD)) interacts with substrate. A Ca(2+)-binding site is contributed by aspartate 226. The tract at residues 230-434 (NNNAMDAYFK…LRKSNPAIAY (205 aa)) is A2. Residue arginine 254 coordinates substrate. Aspartate 256 (nucleophile) is an active-site residue. 259 to 260 (KH) serves as a coordination point for substrate. Histidine 260 lines the Ca(2+) pocket. The active-site Proton donor is the glutamate 285. Substrate contacts are provided by histidine 355, aspartate 399, and arginine 403. The interval 435-523 (GTTTERWVNN…GTAVWQYTAP (89 aa)) is c. The d stretch occupies residues 524–610 (ETSPAIGNVG…SNTFKSFNVL (87 aa)). The IPT/TIG domain maps to 527–607 (PAIGNVGPTM…GTASNTFKSF (81 aa)). The CBM20 domain occupies 609 to 714 (VLTGDQVTVR…VGTVTVDWQN (106 aa)). Residues 611–714 (TGDQVTVRFL…VGTVTVDWQN (104 aa)) are e.

The protein belongs to the glycosyl hydrolase 13 family. Monomer. The cofactor is Ca(2+).

Its subcellular location is the secreted. It carries out the reaction Cyclizes part of a (1-&gt;4)-alpha-D-glucan chain by formation of a (1-&gt;4)-alpha-D-glucosidic bond.. This is Cyclomaltodextrin glucanotransferase (cgtM) from Paenibacillus macerans (Bacillus macerans).